Here is a 468-residue protein sequence, read N- to C-terminus: MYHIHRLLAPIRSNSVFFSLAQLPKPSLIGCRYKSNNVGSQDSKRTSKNSILHNLGSYSNSAESEILNKLKPITPNDLYVSCTSFDRIGNITAVSRKYPKMQFLKENHLFPRDLRKIDTSSIDVVPVIMIRPSSAILVNLLHIKAIIKKDNVMVFDTSKSEVATKLGIFMYDLELKLKSPANNVCYEFRALESILVSVTSYLEAEIKLHRQQCGIILAELEDEVDRAKLQELLIRSKKLSSFHQRAILIRDVLEELLENDEDLAGMYLTDLKRFEPEEENYEEIESILESYYNQCDEYVQQAGSLLSDIKATEEIVNIILDANRNSLMLFELKITVYTLGFTVATLVPAFYGMNLKNYIEETNWGFGLVLVVSLLQGLAITWLNFRKLHKVQKLTMMGTSNSSKAGTGLSRHIPPTSRVDRWKRGSFLYRLFYGSGGKYSKPSKKFDRPTNREKDAMWRMINDDKAMK.

Residues Met1–Tyr33 constitute a mitochondrion transit peptide. Residues Leu327–Val347 form a helical membrane-spanning segment. Positions Tyr351–Asn354 match the YGMN motif. Residues Gly365–Phe385 form a helical membrane-spanning segment.

This sequence belongs to the CorA metal ion transporter (MIT) (TC 1.A.35) family. As to quaternary structure, homopentamer. Forms homooligomers. Interacts with MFM1.

It is found in the mitochondrion inner membrane. In terms of biological role, high-conductance magnesium-selective channel that mediates the influx of magnesium into the mitochondrial matrix. Essential for the splicing of mRNA group II introns in mitochondria by affecting mitochondrial magnesium concentrations, which are critical for group II intron splicing. It also suppresses a variety of mitochondrial intron mutations and its absence may disturb the assembly of mitochondrial membrane complexes. This chain is Mitochondrial inner membrane magnesium transporter MRS2 (MRS2), found in Candida albicans (strain SC5314 / ATCC MYA-2876) (Yeast).